We begin with the raw amino-acid sequence, 37 residues long: Large ribosomal subunit protein bL36 (37 aa).

The protein belongs to the bacterial ribosomal protein bL36 family.

The sequence is that of Large ribosomal subunit protein bL36 from Maridesulfovibrio salexigens (strain ATCC 14822 / DSM 2638 / NCIMB 8403 / VKM B-1763) (Desulfovibrio salexigens).